The following is a 290-amino-acid chain: Pantothenate synthetase (290 aa).

34–41 (MGNLHDGH) lines the ATP pocket. The active-site Proton donor is histidine 41. Glutamine 65 is a binding site for (R)-pantoate. Glutamine 65 is a beta-alanine binding site. 156 to 159 (GKKD) contacts ATP. Glutamine 162 is a (R)-pantoate binding site. Residues alanine 185 and 193–196 (LSSR) contribute to the ATP site.

This sequence belongs to the pantothenate synthetase family. Homodimer.

It localises to the cytoplasm. It catalyses the reaction (R)-pantoate + beta-alanine + ATP = (R)-pantothenate + AMP + diphosphate + H(+). It functions in the pathway cofactor biosynthesis; (R)-pantothenate biosynthesis; (R)-pantothenate from (R)-pantoate and beta-alanine: step 1/1. Its function is as follows. Catalyzes the condensation of pantoate with beta-alanine in an ATP-dependent reaction via a pantoyl-adenylate intermediate. The polypeptide is Pantothenate synthetase (Acidovorax ebreus (strain TPSY) (Diaphorobacter sp. (strain TPSY))).